Consider the following 377-residue polypeptide: Glutamate 5-kinase (377 aa).

Lysine 20 serves as a coordination point for ATP. 3 residues coordinate substrate: serine 60, aspartate 147, and asparagine 159. An ATP-binding site is contributed by 179–180 (TD). The region spanning 285–363 (AGRLVIDAGA…DKVHQVLGEA (79 aa)) is the PUA domain.

Belongs to the glutamate 5-kinase family.

The protein resides in the cytoplasm. The catalysed reaction is L-glutamate + ATP = L-glutamyl 5-phosphate + ADP. Its pathway is amino-acid biosynthesis; L-proline biosynthesis; L-glutamate 5-semialdehyde from L-glutamate: step 1/2. In terms of biological role, catalyzes the transfer of a phosphate group to glutamate to form L-glutamate 5-phosphate. This chain is Glutamate 5-kinase, found in Acinetobacter baylyi (strain ATCC 33305 / BD413 / ADP1).